A 1290-amino-acid polypeptide reads, in one-letter code: Sorbin and SH3 domain-containing protein 1 (1290 aa).

Disordered stretches follow at residues 1-211 (MSSE…LSDV), 238-271 (HKLNRDDDSDVHSPRYSFSDDTKSPLSVPRSKSE), and 286-313 (TLPLPARSSSLKSSPERNDWEPLDKKVD). Residues 45 to 61 (SSSYRGTPSSSPVSPQE) show a composition bias toward low complexity. The residue at position 51 (T51) is a Phosphothreonine. Phosphoserine occurs at positions 55, 58, and 62. Over residues 62–71 (SPKHESKSGL) the composition is skewed to basic and acidic residues. Polar residues-rich tracts occupy residues 83–95 (LSSSADTNGNAQP) and 123–153 (EVSSSHIETDSQDFPPTSRPSSAYPSTTIVN). The segment covering 161-173 (HNRDPASERRAGE) has biased composition (basic and acidic residues). Phosphoserine is present on residues D164 and D175. Phosphothreonine is present on T179. 8 positions are modified to phosphoserine: S185, A194, S204, S209, S254, S261, S270, and P288. Basic and acidic residues predominate over residues 189–199 (ASERRAKDASR). The SoHo domain maps to 202 to 247 (VRSAQDLSDVSTDEVGIPLRNTERSKDWYKTMFKQIHKLNRDDDSD). Residues 240 to 260 (LNRDDDSDVHSPRYSFSDDTK) show a composition bias toward basic and acidic residues. Basic and acidic residues predominate over residues 299 to 313 (SPERNDWEPLDKKVD). Position 325 is a phosphotyrosine; by ABL1 (Y325). Phosphoserine occurs at positions 345, 346, 357, 376, and 407. The disordered stretch occupies residues 389–416 (VETVNKSPSANSPQSSAVSPTPDITSEP). A compositionally biased stretch (polar residues) spans 392 to 412 (VNKSPSANSPQSSAVSPTPDI). At Y421 the chain carries Phosphotyrosine; by ABL1. Phosphoserine occurs at positions 432 and 470. Disordered regions lie at residues 463–482 (LSGLKRPSSSASTKVDRKGG), 588–607 (YDSKSSSTMSLQEYGTSSRR), 697–739 (SLDF…EMDG), 783–803 (VSNDSREGSGGSVHGDFPKHR), 822–841 (RKHEQQSSRQSDWRSDSRGD), and 862–972 (PLQQ…SPRH). At T475 the chain carries Phosphothreonine. Polar residues-rich tracts occupy residues 595 to 606 (TMSLQEYGTSSR) and 704 to 722 (LSKSPTPVLSRSGLTSARS). Phosphoserine is present on S969. 2 SH3 domains span residues 1049 to 1108 (LEMR…LLPP) and 1123 to 1184 (LEYG…VLKR). T1189 carries the phosphothreonine modification. Phosphotyrosine is present on residues Y1193 and Y1198. Residues 1198 to 1210 (YSSSPSRSATVSP) show a composition bias toward low complexity. Residues 1198–1227 (YSSSPSRSATVSPQQPQAQQRRVTPDRSQP) form a disordered region. Residues S1201 and S1209 each carry the phosphoserine modification. The segment covering 1211–1227 (QQPQAQQRRVTPDRSQP) has biased composition (polar residues). The SH3 3 domain occupies 1229-1290 (LDLCSYQALY…PGNYVKPLYL (62 aa)). Y1238 is subject to Phosphotyrosine; by ABL1.

Interacts (via SH3 domain 2) with PXN. Interacts with the long isoform of AFDN and with VCL. AFDN and VCL bind to SORBS1 in a competitive manner and do not form a ternary complex. Interacts with ABL1, CBL, CBLB and INPPL1/SHIP2 through the third SH3 domain. Interaction with ABL1 occurs only after insulin stimulation while this has no effect on the interaction with INPPL1. Interacts with the insulin receptor but dissociates from it following insulin stimulation. Also interacts with SCA7, PTK2/FAK1 and flotillin. Interacts (via third SH3 domain) with the Ten-1 ICD form of TENM1; the interaction induces the translocation of SORBS1 to the nucleus. Interacts with INSM1. In terms of processing, O-glycosylated. In terms of tissue distribution, expressed in all tissues tested: heart, brain, spleen, lung, liver, muscle, kidney and testis. Expressed in 3T3-L1 adipocytes but not in 3T3-L1 fibroblasts.

The protein localises to the cell junction. It localises to the adherens junction. It is found in the cell membrane. The protein resides in the cytoplasm. Its subcellular location is the cytoskeleton. The protein localises to the focal adhesion. It localises to the nucleus. It is found in the nucleus matrix. In terms of biological role, plays a role in tyrosine phosphorylation of CBL by linking CBL to the insulin receptor. Required for insulin-stimulated glucose transport. Involved in formation of actin stress fibers and focal adhesions. The chain is Sorbin and SH3 domain-containing protein 1 from Mus musculus (Mouse).